The following is a 415-amino-acid chain: CCA-adding enzyme (415 aa).

Residues Ser52 and Arg55 each contribute to the ATP site. Residues Ser52 and Arg55 each contribute to the CTP site. Mg(2+) is bound by residues Asp64, Asp66, and Asp116. The ATP site is built by His139, Lys159, and Tyr168. Positions 139, 159, and 168 each coordinate CTP.

Belongs to the tRNA nucleotidyltransferase/poly(A) polymerase family. Archaeal CCA-adding enzyme subfamily. In terms of assembly, homodimer. The cofactor is Mg(2+).

The enzyme catalyses a tRNA precursor + 2 CTP + ATP = a tRNA with a 3' CCA end + 3 diphosphate. The catalysed reaction is a tRNA with a 3' CCA end + 2 CTP + ATP = a tRNA with a 3' CCACCA end + 3 diphosphate. In terms of biological role, catalyzes the addition and repair of the essential 3'-terminal CCA sequence in tRNAs without using a nucleic acid template. Adds these three nucleotides in the order of C, C, and A to the tRNA nucleotide-73, using CTP and ATP as substrates and producing inorganic pyrophosphate. tRNA 3'-terminal CCA addition is required both for tRNA processing and repair. Also involved in tRNA surveillance by mediating tandem CCA addition to generate a CCACCA at the 3' terminus of unstable tRNAs. While stable tRNAs receive only 3'-terminal CCA, unstable tRNAs are marked with CCACCA and rapidly degraded. The sequence is that of CCA-adding enzyme from Pyrobaculum neutrophilum (strain DSM 2338 / JCM 9278 / NBRC 100436 / V24Sta) (Thermoproteus neutrophilus).